A 274-amino-acid polypeptide reads, in one-letter code: Large ribosomal subunit protein uL2 (274 aa).

The disordered stretch occupies residues 223–274 (VAMNPVDHPHGGGEGRTSGGRHPVTPWGVPTKGYKTRSNKRTDKYIVRRRNK).

Belongs to the universal ribosomal protein uL2 family. As to quaternary structure, part of the 50S ribosomal subunit. Forms a bridge to the 30S subunit in the 70S ribosome.

Functionally, one of the primary rRNA binding proteins. Required for association of the 30S and 50S subunits to form the 70S ribosome, for tRNA binding and peptide bond formation. It has been suggested to have peptidyltransferase activity; this is somewhat controversial. Makes several contacts with the 16S rRNA in the 70S ribosome. This chain is Large ribosomal subunit protein uL2, found in Shewanella oneidensis (strain ATCC 700550 / JCM 31522 / CIP 106686 / LMG 19005 / NCIMB 14063 / MR-1).